The chain runs to 231 residues: Ribonuclease 3 (231 aa).

Positions 1-134 (MKTLEKKLAE…FLGALLLDAG (134 aa)) constitute an RNase III domain. Glutamate 47 contacts Mg(2+). The active site involves aspartate 51. Mg(2+)-binding residues include aspartate 120 and glutamate 123. The active site involves glutamate 123. Residues 160-229 (DYKTALQELL…AKNALEKLQR (70 aa)) enclose the DRBM domain.

This sequence belongs to the ribonuclease III family. Homodimer. Mg(2+) is required as a cofactor.

The protein resides in the cytoplasm. The enzyme catalyses Endonucleolytic cleavage to 5'-phosphomonoester.. Functionally, digests double-stranded RNA. Involved in the processing of primary rRNA transcript to yield the immediate precursors to the large and small rRNAs (23S and 16S). Also processes some mRNAs, and tRNAs when they are encoded in the rRNA operon. Its function is as follows. CRISPR (clustered regularly interspaced short palindromic repeat) is an adaptive immune system that provides protection against mobile genetic elements (viruses, transposable elements and conjugative plasmids). CRISPR clusters contain spacers, sequences complementary to antecedent mobile elements, and target invading nucleic acids. CRISPR clusters are transcribed and processed into CRISPR RNA (crRNA). In this organism endogenous ribonuclease 3 and Cas9 are required for correct coprocessing of pre-crRNA and the trans-encoded small RNA (tracrRNA). Cas9, crRNA and tracrRNA are required for cleavage of invading DNA. Complements pre-crRNA and tracrRNA coprocessing defects in an rnc deletion in S.pyogenes strain 370. The chain is Ribonuclease 3 from Streptococcus mutans serotype c (strain ATCC 700610 / UA159).